The sequence spans 610 residues: Cytosolic 5'-nucleotidase 1B (610 aa).

2 disordered regions span residues 1–34 (MSQTSLKQKKNEPGMRSSKESLEAEKRKESDKTG) and 101–277 (GSQE…DEDD). Positions 9–34 (KKNEPGMRSSKESLEAEKRKESDKTG) are enriched in basic and acidic residues. Residues 119–132 (SQWSRISRSPSTKA) show a composition bias toward polar residues. Residues 148-166 (PSSSTSSRTPSTSPSLHDS) are compositionally biased toward low complexity. A compositionally biased stretch (pro residues) spans 167 to 183 (SPPPLSGQPSLQPPASP). Over residues 236–265 (SRTSPTEWKSSSQRRGIYPASTQLDRNSLS) the composition is skewed to polar residues. Asp-467 serves as the catalytic Nucleophile.

It belongs to the 5'-nucleotidase type 3 family. The cofactor is Mg(2+). Highly expressed in testis, placenta and pancreas. Detected at lower levels in heart, kidney, liver and lung.

It is found in the cytoplasm. The catalysed reaction is a ribonucleoside 5'-phosphate + H2O = a ribonucleoside + phosphate. It carries out the reaction AMP + H2O = adenosine + phosphate. With respect to regulation, activated by ADP. Catalyzes the hydrolysis of nucleotide monophosphates, releasing inorganic phosphate and the corresponding nucleoside, AMP is the major substrate. This chain is Cytosolic 5'-nucleotidase 1B (NT5C1B), found in Homo sapiens (Human).